Here is a 218-residue protein sequence, read N- to C-terminus: Leucine-rich repeat protein 2 (218 aa).

Residues 1-27 (MVAQNSRRELLAASLILTLALIRLTEA) form the signal peptide. 5 LRR repeats span residues 69 to 93 (HHQVTRLDLGNSNLSGHLVPELGKL), 94 to 117 (EHLQYLELYKNEIQGTIPSELGNL), 119 to 141 (SLISLDLYNNNLTGKIPSSLGKL), 142 to 165 (KSLVFLRLNENRLTGPIPRELTVI), and 167 to 190 (SLKVVDVSGNDLCGTIPVEGPFEH).

Its function is as follows. Probably involved in plant defense response. In Arabidopsis thaliana (Mouse-ear cress), this protein is Leucine-rich repeat protein 2.